The sequence spans 418 residues: uncharacterized protein (418 aa).

The protein belongs to the poxviruses C4/C10 family.

This is an uncharacterized protein from Fowlpox virus (strain NVSL) (FPV).